The sequence spans 296 residues: Cytidine deaminase (296 aa).

CMP/dCMP-type deaminase domains are found at residues Thr-47–Lys-167 and Asp-186–Ile-296. Substrate is bound at residue Asn-88–Glu-90. Position 101 (His-101) interacts with Zn(2+). Catalysis depends on Glu-103, which acts as the Proton donor. Residues Cys-128 and Cys-131 each contribute to the Zn(2+) site.

Belongs to the cytidine and deoxycytidylate deaminase family. Homodimer. The cofactor is Zn(2+).

It catalyses the reaction cytidine + H2O + H(+) = uridine + NH4(+). The catalysed reaction is 2'-deoxycytidine + H2O + H(+) = 2'-deoxyuridine + NH4(+). This enzyme scavenges exogenous and endogenous cytidine and 2'-deoxycytidine for UMP synthesis. The protein is Cytidine deaminase of Shewanella oneidensis (strain ATCC 700550 / JCM 31522 / CIP 106686 / LMG 19005 / NCIMB 14063 / MR-1).